Reading from the N-terminus, the 629-residue chain is Embryonic polyadenylate-binding protein (629 aa).

RRM domains are found at residues 11 to 89, 99 to 175, 191 to 268, and 294 to 370; these read ASLY…WSQR, GNVF…HFKS, TNVY…RAQK, and VNLY…LAQR. One can recognise a PABC domain in the interval 539-616; it reads QEPLTASSLA…AVAVLQAHQA (78 aa).

The protein belongs to the polyadenylate-binding protein type-1 family. Interacts with dazl in an RNA-independent manner. The C-terminus can self-associate and also interact with the C-terminus of pabpc1, independently of RNA. RRM 1 and RRM 2 interact with both eif4g1 and paip1, and the C-terminus also interacts with paip1. Prior to oocyte maturation, found in a complex with dazl and pum2 proteins and spdy1 mRNA; pum2 dissociates from the complex during maturation. Interacts with the translation termination factor sup35/erf3.

The protein resides in the cytoplasm. Its function is as follows. Binds and protects the poly(A) tail of mRNA with or without an AU-rich element (ARE) and prevents mRNA deadenylation. Stimulates the translation of mRNAs to which it is bound during early development. In Xenopus tropicalis (Western clawed frog), this protein is Embryonic polyadenylate-binding protein.